A 622-amino-acid chain; its full sequence is 1-deoxy-D-xylulose-5-phosphate synthase (622 aa).

Thiamine diphosphate-binding positions include histidine 80 and 121–123 (GHS). Mg(2+) is bound at residue aspartate 152. Residues 153–154 (GA), asparagine 181, tyrosine 288, and glutamate 370 contribute to the thiamine diphosphate site. Asparagine 181 contacts Mg(2+).

It belongs to the transketolase family. DXPS subfamily. Homodimer. Requires Mg(2+) as cofactor. The cofactor is thiamine diphosphate.

It carries out the reaction D-glyceraldehyde 3-phosphate + pyruvate + H(+) = 1-deoxy-D-xylulose 5-phosphate + CO2. Its pathway is metabolic intermediate biosynthesis; 1-deoxy-D-xylulose 5-phosphate biosynthesis; 1-deoxy-D-xylulose 5-phosphate from D-glyceraldehyde 3-phosphate and pyruvate: step 1/1. In terms of biological role, catalyzes the acyloin condensation reaction between C atoms 2 and 3 of pyruvate and glyceraldehyde 3-phosphate to yield 1-deoxy-D-xylulose-5-phosphate (DXP). The polypeptide is 1-deoxy-D-xylulose-5-phosphate synthase (Shewanella oneidensis (strain ATCC 700550 / JCM 31522 / CIP 106686 / LMG 19005 / NCIMB 14063 / MR-1)).